The following is a 1313-amino-acid chain: Envelopment polyprotein (1313 aa).

Residues 1–17 form the signal peptide; the sequence is MIFTILNVLTRAMLVMS. Residues 18–712 lie on the Lumenal side of the membrane; that stretch reads MYSLTTWDST…HSTLSAILTS (695 aa). Asparagine 76 and asparagine 102 each carry an N-linked (GlcNAc...) asparagine; by host glycan. Residues 178–237 are a coiled coil; that stretch reads MQVLMSEIEQLKNQLSKKRNERGQEKRDAEKVMSDLMARNSDLRKHNDILTAEISQMKNK. Positions 250 to 270 are internal signal sequence for glycoprotein N; it reads TVVPAILSVALLSSSVAPIIA. Disulfide bonds link cysteine 303-cysteine 312, cysteine 352-cysteine 362, cysteine 373-cysteine 404, cysteine 394-cysteine 407, cysteine 432-cysteine 579, cysteine 450-cysteine 460, cysteine 501-cysteine 557, cysteine 525-cysteine 536, cysteine 543-cysteine 548, cysteine 602-cysteine 605, cysteine 609-cysteine 679, and cysteine 629-cysteine 634. Asparagine 496 is a glycosylation site (N-linked (GlcNAc...) asparagine; by host). Residues 713–733 traverse the membrane as a helical segment; that stretch reads FLLILFIYTVFSVTTNILYVL. The golgi retention signal stretch occupies residues 731–773; the sequence is YVLRLIPKQLKSPVGWLKLFINWLLTALRIKTRNVMRRINQRI. The Cytoplasmic portion of the chain corresponds to 734–791; it reads RLIPKQLKSPVGWLKLFINWLLTALRIKTRNVMRRINQRIGWVDHHDVERPRHREPMR. The interval 769-773 is important for correct targeting of the glycoproteins to the Golgi complex but not for heterodimerization; the sequence is INQRI. Residues 793–809 form an internal signal sequence for glycoprotein C region; the sequence is FKTTLLLTLIMMTGGNA. Intrachain disulfides connect cysteine 810-cysteine 850, cysteine 823-cysteine 832, cysteine 875-cysteine 971, cysteine 890-cysteine 1084, cysteine 896-cysteine 944, cysteine 902-cysteine 951, cysteine 907-cysteine 933, cysteine 937-cysteine 942, cysteine 1053-cysteine 1066, cysteine 1148-cysteine 1220, cysteine 1158-cysteine 1161, and cysteine 1168-cysteine 1202. Over 810–1278 the chain is Lumenal; sequence CSNTVVANSK…LDWLGGPMKA (469 aa). Positions 896-902 are fusion loop; sequence CHLVGDC. The fusion loop stretch occupies residues 938–949; that stretch reads GAIGCGCFNINP. An N-linked (GlcNAc...) asparagine; by host glycan is attached at asparagine 1154. N-linked (GlcNAc...) asparagine; by host glycosylation occurs at asparagine 1243. Residues 1279–1299 form a helical membrane-spanning segment; it reads ILKILGFIAIGIVCFVLFMIL. The Cytoplasmic segment spans residues 1300-1313; it reads IRIAVNSINIKKKN.

The protein belongs to the phlebovirus envelope glycoprotein family. Heterodimer with glycoprotein C. Interacts with nucleocapsid protein N and with the polymerase L in order to package them into virus particles. In terms of assembly, heterodimer with glycoprotein C. Homotrimer (postfusion). Interacts with nucleocapsid protein N and with the polymerase L in order to package them into virus particles. Interacts with host E3 ubiquitin-protein ligase UBR4; this interaction is important for viral RNA production. Post-translationally, specific enzymatic cleavages in vivo yield mature proteins including NSm protein, Glycoprotein C, and Glycoprotein N. In terms of processing, glycosylated. The glycans can attach to host CD209/DC-SIGN, and may play a role in virus entry into dendritic cells. Palmitoylated.

The protein localises to the virion membrane. It localises to the host Golgi apparatus membrane. The protein resides in the host endoplasmic reticulum membrane. In terms of biological role, structural component of the virion that interacts with glycoprotein C. It shields the hydrophobic fusion loops of the glycoprotein C, preventing premature fusion. The glycoprotein protrusions are arranged on an icosahedral lattice, with T=12 triangulation. They are able to attach the virion to the host cell receptor CD209/DC-SIGN and to promote fusion of membranes with the late endosome after endocytosis of the virion. Plays a role in the packaging of ribonucleoproteins and polymerase during virus assembly. Its function is as follows. Structural component of the virion that interacts with glycoprotein N. Acts as a class II fusion protein that is activated upon acidification and subsequent repositioning of the glycoprotein N. The glycoprotein protrusions are arranged on an icosahedral lattice, with T=12 triangulation. They are able to attach the virion to the host cell receptor CD209/DC-SIGN and to promote fusion of membranes with the late endosome after endocytosis of the virion. Plays a role for virus dissemination in mosquitoes. This chain is Envelopment polyprotein (GP), found in Homo sapiens (Human).